Reading from the N-terminus, the 327-residue chain is Dolichyl-phosphate beta-glucosyltransferase (327 aa).

Topologically, residues 1-15 (MIDLFINIASFTIYG) are lumenal. A helical transmembrane segment spans residues 16 to 36 (IPVIPLFIIVFVILSYYLLLL). Topologically, residues 37-327 (HDESPLWLEK…YLLGIWKIKS (291 aa)) are cytoplasmic.

It belongs to the glycosyltransferase 2 family.

It is found in the endoplasmic reticulum membrane. The catalysed reaction is a di-trans,poly-cis-dolichyl phosphate + UDP-alpha-D-glucose = a di-trans,poly-cis-dolichyl beta-D-glucosyl phosphate + UDP. The protein operates within protein modification; protein glycosylation. Its function is as follows. Endoplasmic reticulum membrane-bound UDP-glucose:dolichyl-phosphate glucosyltransferase involved in protein N-linked glycosylation. The protein is Dolichyl-phosphate beta-glucosyltransferase (alg5) of Dictyostelium discoideum (Social amoeba).